The chain runs to 229 residues: Large ribosomal subunit protein uL1 (229 aa).

Belongs to the universal ribosomal protein uL1 family. Part of the 50S ribosomal subunit.

Functionally, binds directly to 23S rRNA. The L1 stalk is quite mobile in the ribosome, and is involved in E site tRNA release. Protein L1 is also a translational repressor protein, it controls the translation of the L11 operon by binding to its mRNA. This Streptococcus agalactiae serotype Ia (strain ATCC 27591 / A909 / CDC SS700) protein is Large ribosomal subunit protein uL1.